Reading from the N-terminus, the 534-residue chain is CTP synthase (534 aa).

The interval 1–268 (MAAKYIFVTG…DQIVCDHLQL (268 aa)) is amidoligase domain. S14 is a CTP binding site. Residue S14 participates in UTP binding. 15 to 20 (SLGKGI) is an ATP binding site. Y55 provides a ligand contact to L-glutamine. D72 is a binding site for ATP. Mg(2+) contacts are provided by D72 and E142. CTP contacts are provided by residues 149 to 151 (DIE), 189 to 194 (KSKPTQ), and K225. UTP is bound by residues 189 to 194 (KSKPTQ) and K225. In terms of domain architecture, Glutamine amidotransferase type-1 spans 293–534 (RIAIVGKYVE…FVRNALAAQA (242 aa)). Residue G355 participates in L-glutamine binding. The active-site Nucleophile; for glutamine hydrolysis is C382. Residues 383-386 (LGMQ), E406, and R463 contribute to the L-glutamine site. Active-site residues include H508 and E510.

This sequence belongs to the CTP synthase family. Homotetramer.

It catalyses the reaction UTP + L-glutamine + ATP + H2O = CTP + L-glutamate + ADP + phosphate + 2 H(+). The catalysed reaction is L-glutamine + H2O = L-glutamate + NH4(+). It carries out the reaction UTP + NH4(+) + ATP = CTP + ADP + phosphate + 2 H(+). It participates in pyrimidine metabolism; CTP biosynthesis via de novo pathway; CTP from UDP: step 2/2. Its activity is regulated as follows. Allosterically activated by GTP, when glutamine is the substrate; GTP has no effect on the reaction when ammonia is the substrate. The allosteric effector GTP functions by stabilizing the protein conformation that binds the tetrahedral intermediate(s) formed during glutamine hydrolysis. Inhibited by the product CTP, via allosteric rather than competitive inhibition. Catalyzes the ATP-dependent amination of UTP to CTP with either L-glutamine or ammonia as the source of nitrogen. Regulates intracellular CTP levels through interactions with the four ribonucleotide triphosphates. This chain is CTP synthase, found in Shouchella clausii (strain KSM-K16) (Alkalihalobacillus clausii).